A 164-amino-acid polypeptide reads, in one-letter code: Phosphopantetheine adenylyltransferase (164 aa).

S9 is a substrate binding site. ATP is bound by residues 9-10 (SF) and H17. The substrate site is built by K41, V78, and R92. ATP contacts are provided by residues 93-95 (GLR), E103, and 128-134 (SRPITAT).

It belongs to the bacterial CoaD family. As to quaternary structure, homohexamer. Mg(2+) is required as a cofactor.

It localises to the cytoplasm. It catalyses the reaction (R)-4'-phosphopantetheine + ATP + H(+) = 3'-dephospho-CoA + diphosphate. It participates in cofactor biosynthesis; coenzyme A biosynthesis; CoA from (R)-pantothenate: step 4/5. Functionally, reversibly transfers an adenylyl group from ATP to 4'-phosphopantetheine, yielding dephospho-CoA (dPCoA) and pyrophosphate. This Sinorhizobium fredii (strain NBRC 101917 / NGR234) protein is Phosphopantetheine adenylyltransferase.